A 115-amino-acid polypeptide reads, in one-letter code: Large ribosomal subunit protein bL19 (115 aa).

This sequence belongs to the bacterial ribosomal protein bL19 family.

Functionally, this protein is located at the 30S-50S ribosomal subunit interface and may play a role in the structure and function of the aminoacyl-tRNA binding site. The protein is Large ribosomal subunit protein bL19 of Clostridium tetani (strain Massachusetts / E88).